Consider the following 243-residue polypeptide: Probable transcriptional regulatory protein BDU_30 (243 aa).

Belongs to the TACO1 family.

It localises to the cytoplasm. The protein is Probable transcriptional regulatory protein BDU_30 of Borrelia duttonii (strain Ly).